The following is a 143-amino-acid chain: HTH-type transcriptional regulator CueR (143 aa).

The 69-residue stretch at 11 to 79 (TYRISELAAL…LSDIKDRLEN (69 aa)) folds into the HTH merR-type domain. Residues 14-33 (ISELAALAGVTKRTVDYYTN) constitute a DNA-binding region (H-T-H motif).

Functionally, transcriptional activator of the copZA operon. The polypeptide is HTH-type transcriptional regulator CueR (cueR) (Bacillus subtilis (strain 168)).